The chain runs to 367 residues: Glutamate 5-kinase (367 aa).

ATP is bound at residue lysine 9. Substrate is bound by residues serine 49, aspartate 136, and asparagine 148. ATP contacts are provided by residues 168–169 (TD) and 210–216 (TGGMKSK). The region spanning 276–350 (SGQIEIDAGA…GMQSQHIQAR (75 aa)) is the PUA domain.

This sequence belongs to the glutamate 5-kinase family.

The protein localises to the cytoplasm. The enzyme catalyses L-glutamate + ATP = L-glutamyl 5-phosphate + ADP. Its pathway is amino-acid biosynthesis; L-proline biosynthesis; L-glutamate 5-semialdehyde from L-glutamate: step 1/2. In terms of biological role, catalyzes the transfer of a phosphate group to glutamate to form L-glutamate 5-phosphate. In Bacillus cereus (strain ZK / E33L), this protein is Glutamate 5-kinase.